Here is a 160-residue protein sequence, read N- to C-terminus: UPF0260 protein GDI1595/Gdia_1801 (160 aa).

The protein belongs to the UPF0260 family.

This chain is UPF0260 protein GDI1595/Gdia_1801, found in Gluconacetobacter diazotrophicus (strain ATCC 49037 / DSM 5601 / CCUG 37298 / CIP 103539 / LMG 7603 / PAl5).